The sequence spans 330 residues: DNA-directed RNA polymerase subunit alpha (330 aa).

The tract at residues 1–225 (MSDLAIPTIS…KQFAALVSHN (225 aa)) is alpha N-terminal domain (alpha-NTD). The interval 237-330 (VKYAIPEEKY…KKKNKGMDEA (94 aa)) is alpha C-terminal domain (alpha-CTD).

This sequence belongs to the RNA polymerase alpha chain family. In terms of assembly, homodimer. The RNAP catalytic core consists of 2 alpha, 1 beta, 1 beta' and 1 omega subunit. When a sigma factor is associated with the core the holoenzyme is formed, which can initiate transcription.

The enzyme catalyses RNA(n) + a ribonucleoside 5'-triphosphate = RNA(n+1) + diphosphate. Functionally, DNA-dependent RNA polymerase catalyzes the transcription of DNA into RNA using the four ribonucleoside triphosphates as substrates. The polypeptide is DNA-directed RNA polymerase subunit alpha (Dehalococcoides mccartyi (strain ATCC BAA-2266 / KCTC 15142 / 195) (Dehalococcoides ethenogenes (strain 195))).